A 201-amino-acid polypeptide reads, in one-letter code: Adenylyl-sulfate kinase (201 aa).

An ATP-binding site is contributed by 35–42 (GLSGSGKS). Ser109 acts as the Phosphoserine intermediate in catalysis.

The protein belongs to the APS kinase family.

It catalyses the reaction adenosine 5'-phosphosulfate + ATP = 3'-phosphoadenylyl sulfate + ADP + H(+). It participates in sulfur metabolism; hydrogen sulfide biosynthesis; sulfite from sulfate: step 2/3. In terms of biological role, catalyzes the synthesis of activated sulfate. The polypeptide is Adenylyl-sulfate kinase (Shigella boydii serotype 18 (strain CDC 3083-94 / BS512)).